Reading from the N-terminus, the 365-residue chain is 3-dehydroquinate synthase (365 aa).

Residues 75-80 (DAESGK), 109-113 (GAATD), 133-134 (TT), K146, and K155 contribute to the NAD(+) site. E188, H253, and H269 together coordinate Zn(2+).

Belongs to the sugar phosphate cyclases superfamily. Dehydroquinate synthase family. NAD(+) is required as a cofactor. Requires Co(2+) as cofactor. Zn(2+) serves as cofactor.

The protein localises to the cytoplasm. The catalysed reaction is 7-phospho-2-dehydro-3-deoxy-D-arabino-heptonate = 3-dehydroquinate + phosphate. It participates in metabolic intermediate biosynthesis; chorismate biosynthesis; chorismate from D-erythrose 4-phosphate and phosphoenolpyruvate: step 2/7. Functionally, catalyzes the conversion of 3-deoxy-D-arabino-heptulosonate 7-phosphate (DAHP) to dehydroquinate (DHQ). In Corynebacterium efficiens (strain DSM 44549 / YS-314 / AJ 12310 / JCM 11189 / NBRC 100395), this protein is 3-dehydroquinate synthase.